A 217-amino-acid polypeptide reads, in one-letter code: Adenylate kinase (217 aa).

10–15 (GAGKGT) serves as a coordination point for ATP. An NMP region spans residues 30 to 59 (STGDMLRAQIKAGTELGMKAKAIMDAGGLV). Residues Thr31, Arg36, 57–59 (GLV), 85–88 (GFPR), and Gln92 each bind AMP. Positions 122 to 159 (GRRVHVASGRTYHVVFNPPKVAGKDDVTGEDLIQRDDD) are LID. ATP contacts are provided by residues Arg123 and 132-133 (TY). Residues Arg156 and Arg167 each contribute to the AMP site. Gly203 lines the ATP pocket.

It belongs to the adenylate kinase family. As to quaternary structure, monomer.

It localises to the cytoplasm. The catalysed reaction is AMP + ATP = 2 ADP. It functions in the pathway purine metabolism; AMP biosynthesis via salvage pathway; AMP from ADP: step 1/1. Functionally, catalyzes the reversible transfer of the terminal phosphate group between ATP and AMP. Plays an important role in cellular energy homeostasis and in adenine nucleotide metabolism. This Thiobacillus denitrificans (strain ATCC 25259 / T1) protein is Adenylate kinase.